Here is a 95-residue protein sequence, read N- to C-terminus: Pyrimidine/purine nucleoside phosphorylase (95 aa).

Belongs to the nucleoside phosphorylase PpnP family.

It carries out the reaction a purine D-ribonucleoside + phosphate = a purine nucleobase + alpha-D-ribose 1-phosphate. It catalyses the reaction adenosine + phosphate = alpha-D-ribose 1-phosphate + adenine. The catalysed reaction is cytidine + phosphate = cytosine + alpha-D-ribose 1-phosphate. The enzyme catalyses guanosine + phosphate = alpha-D-ribose 1-phosphate + guanine. It carries out the reaction inosine + phosphate = alpha-D-ribose 1-phosphate + hypoxanthine. It catalyses the reaction thymidine + phosphate = 2-deoxy-alpha-D-ribose 1-phosphate + thymine. The catalysed reaction is uridine + phosphate = alpha-D-ribose 1-phosphate + uracil. The enzyme catalyses xanthosine + phosphate = alpha-D-ribose 1-phosphate + xanthine. Catalyzes the phosphorolysis of diverse nucleosides, yielding D-ribose 1-phosphate and the respective free bases. Can use uridine, adenosine, guanosine, cytidine, thymidine, inosine and xanthosine as substrates. Also catalyzes the reverse reactions. In Vibrio cholerae serotype O1 (strain ATCC 39315 / El Tor Inaba N16961), this protein is Pyrimidine/purine nucleoside phosphorylase.